Reading from the N-terminus, the 714-residue chain is Polyribonucleotide nucleotidyltransferase (714 aa).

The Mg(2+) site is built by Asp-490 and Asp-496. A KH domain is found at 556 to 615 (PRIETMQIPTDKIREVIGSGGKVIREIVEVSGAKVDINDDGIIKIASPNGDSIKKAYDMI). The region spanning 625-693 (GQVYTGKVVK…DRGKVRLSMK (69 aa)) is the S1 motif domain.

Belongs to the polyribonucleotide nucleotidyltransferase family. The cofactor is Mg(2+).

The protein resides in the cytoplasm. It catalyses the reaction RNA(n+1) + phosphate = RNA(n) + a ribonucleoside 5'-diphosphate. Involved in mRNA degradation. Catalyzes the phosphorolysis of single-stranded polyribonucleotides processively in the 3'- to 5'-direction. The sequence is that of Polyribonucleotide nucleotidyltransferase from Ruegeria pomeroyi (strain ATCC 700808 / DSM 15171 / DSS-3) (Silicibacter pomeroyi).